The sequence spans 335 residues: Phenylalanine--tRNA ligase alpha subunit (335 aa).

Glu-262 serves as a coordination point for Mg(2+).

The protein belongs to the class-II aminoacyl-tRNA synthetase family. Phe-tRNA synthetase alpha subunit type 1 subfamily. As to quaternary structure, tetramer of two alpha and two beta subunits. It depends on Mg(2+) as a cofactor.

Its subcellular location is the cytoplasm. It catalyses the reaction tRNA(Phe) + L-phenylalanine + ATP = L-phenylalanyl-tRNA(Phe) + AMP + diphosphate + H(+). The chain is Phenylalanine--tRNA ligase alpha subunit from Prochlorococcus marinus (strain NATL2A).